The chain runs to 147 residues: Hemoglobin subunit beta-1/2 (147 aa).

Valine 2 is modified (N-acetylvaline). The region spanning 3–147 is the Globin domain; sequence HLSSEEKSAV…VANALAHKYH (145 aa). Threonine 13 carries the phosphothreonine modification. Serine 45 is modified (phosphoserine). Lysine 60 carries the N6-acetyllysine modification. Residue histidine 64 coordinates heme b. Residue lysine 83 is modified to N6-acetyllysine. A heme b-binding site is contributed by histidine 93. Cysteine 94 carries the S-nitrosocysteine modification. Residue lysine 145 is modified to N6-acetyllysine.

This sequence belongs to the globin family. In terms of assembly, heterotetramer of two alpha chains and two beta chains. In terms of tissue distribution, red blood cells.

Its function is as follows. Involved in oxygen transport from the lung to the various peripheral tissues. This Oryctolagus cuniculus (Rabbit) protein is Hemoglobin subunit beta-1/2 (HBB1).